A 586-amino-acid chain; its full sequence is Aspartate--tRNA(Asp/Asn) ligase (586 aa).

Residue Glu-172 participates in L-aspartate binding. An aspartate region spans residues 196–199 (QLYK). Arg-218 is a binding site for L-aspartate. ATP-binding positions include 218–220 (RDE) and Gln-227. His-446 is an L-aspartate binding site. Residue Glu-480 participates in ATP binding. Arg-487 contributes to the L-aspartate binding site. 532–535 (GIDR) lines the ATP pocket.

This sequence belongs to the class-II aminoacyl-tRNA synthetase family. Type 1 subfamily. Homodimer.

The protein localises to the cytoplasm. The enzyme catalyses tRNA(Asx) + L-aspartate + ATP = L-aspartyl-tRNA(Asx) + AMP + diphosphate. Aspartyl-tRNA synthetase with relaxed tRNA specificity since it is able to aspartylate not only its cognate tRNA(Asp) but also tRNA(Asn). Reaction proceeds in two steps: L-aspartate is first activated by ATP to form Asp-AMP and then transferred to the acceptor end of tRNA(Asp/Asn). The polypeptide is Aspartate--tRNA(Asp/Asn) ligase (Borreliella burgdorferi (strain ATCC 35210 / DSM 4680 / CIP 102532 / B31) (Borrelia burgdorferi)).